The following is a 253-amino-acid chain: Uridine phosphorylase (253 aa).

Belongs to the PNP/UDP phosphorylase family. As to quaternary structure, homohexamer.

It is found in the cytoplasm. The enzyme catalyses uridine + phosphate = alpha-D-ribose 1-phosphate + uracil. It participates in pyrimidine metabolism; UMP biosynthesis via salvage pathway; uracil from uridine (phosphorylase route): step 1/1. In terms of biological role, catalyzes the reversible phosphorylytic cleavage of uridine to uracil and ribose-1-phosphate. Shows weak activity towards deoxyuridine and thymidine. The produced molecules are then utilized as carbon and energy sources or in the rescue of pyrimidine bases for nucleotide synthesis. This is Uridine phosphorylase from Escherichia coli (strain K12).